A 1205-amino-acid polypeptide reads, in one-letter code: Bromodomain and PHD finger-containing protein 3 (1205 aa).

Disordered regions lie at residues 1 to 27 (MRKP…KCSP) and 75 to 121 (NSNK…SFRM). The residue at position 17 (serine 17) is a Phosphoserine. The segment covering 75-84 (NSNKENSEQP) has biased composition (polar residues). The segment covering 89-99 (KSKKPSSKGKK) has biased composition (basic residues). The segment at 212–262 (DAFCCVCLDDECHNSNVILFCDICNLAVHQECYGVPYIPEGQWLCRCCLQS) adopts a PHD-type 1 zinc-finger fold. The C2HC pre-PHD-type zinc finger occupies 266-299 (PVDCILCPNKGGAFKQTSDGHWAHVVCAIWIPEV). The PHD-type 2 zinc finger occupies 323 to 387 (LTCYICKQKG…RKTAYCEAHS (65 aa)). The segment at 387–472 (SPPGAATARR…AGQDTPSTLP (86 aa)) is disordered. 2 positions are modified to phosphoserine: serine 400 and serine 403. Positions 417 to 432 (DGEEEEEEEVEEEEQE) are enriched in acidic residues. Positions 444 to 456 (VPKKSKMSLKQKI) are enriched in basic residues. N6-acetyllysine occurs at positions 447, 449, and 671. A Bromo domain is found at 589-693 (LELMPFNVLL…DLGGAILRHA (105 aa)). Phosphoserine occurs at positions 713 and 740. Residues 779–897 (RQKLAQPPPP…LQLGNEPLQR (119 aa)) are disordered. Positions 817 to 827 (LQEEPEDDGDR) are enriched in acidic residues. The span at 839–851 (EPTGPAPSLSEQE) shows a compositional bias: low complexity. Position 900 is a phosphoserine (serine 900). Disordered regions lie at residues 907 to 926 (LSLM…VGRR) and 931 to 1015 (FKKA…SECS). A compositionally biased stretch (basic and acidic residues) spans 942-955 (RSPDRVLENGEDHG). Residues serine 962 and serine 965 each carry the phosphoserine modification. Basic and acidic residues predominate over residues 980–991 (SCSESEGERSPQ). The PWWP domain occupies 1076–1159 (PLELVWAKCR…RDKVLPLGVE (84 aa)).

In terms of assembly, component of some HBO1 complex composed of KAT7/HBO1, MEAF6, ING4 or ING5, and BRPF3. Component of the MOZ/MORF complex composed at least of ING5, KAT6A, KAT6B, MEAF6 and one of BRPF1, BRD1/BRPF2 and BRPF3. Interacts with KAT7/HBO1; the interaction is direct.

It localises to the nucleus. Its function is as follows. Scaffold subunit of various histone acetyltransferase (HAT) complexes, such as the MOZ/MORF and HBO1 complexes, which have a histone H3 acetyltransferase activity. Plays a role in DNA replication initiation by directing KAT7/HBO1 specificity towards histone H3 'Lys-14' acetylation (H3K14ac), thereby facilitating the activation of replication origins. Component of the MOZ/MORF complex which has a histone H3 acetyltransferase activity. In Homo sapiens (Human), this protein is Bromodomain and PHD finger-containing protein 3.